The following is a 103-amino-acid chain: Turripeptide OL55-like (103 aa).

In terms of processing, contains 8 disulfide bonds. In terms of tissue distribution, expressed by the venom duct.

The protein localises to the secreted. Its function is as follows. Acts as a neurotoxin by inhibiting an ion channel. The polypeptide is Turripeptide OL55-like (Lophiotoma albina (Sea snail)).